The sequence spans 732 residues: Integrator complex subunit 13 (732 aa).

The span at 564 to 648 shows a compositional bias: basic and acidic residues; that stretch reads PPEEEERKKR…DETPHMEKSK (85 aa). Residues 564 to 650 are disordered; that stretch reads PPEEEERKKR…TPHMEKSKGP (87 aa). Residues 572–582 carry the Nuclear localization signal (NLS) motif; sequence KRGRKREDRED. Lys611 is covalently cross-linked (Glycyl lysine isopeptide (Lys-Gly) (interchain with G-Cter in SUMO2)). A phosphoserine mark is found at Ser623, Ser626, and Ser678. A cleavage module binding motif (CMBM) region spans residues 649–694; sequence GPVSLLSLWSNRINTANSRKHQEFAGRLNSVNNRAELYQHLKEENG.

It belongs to the Integrator subunit 13 family. In terms of assembly, component of the Integrator complex, composed of core subunits INTS1, INTS2, INTS3, INTS4, INTS5, INTS6, INTS7, INTS8, INTS9/RC74, INTS10, INTS11/CPSF3L, INTS12, INTS13, INTS14 and INTS15. The core complex associates with protein phosphatase 2A subunits PPP2CA and PPP2R1A, to form the Integrator-PP2A (INTAC) complex. INTS13 is part of the tail subcomplex, composed of INTS10, INTS13, INTS14 and INTS15. Interacts with transcription factors ZNF609 and ZNF655. Interacts with PAFAH1B1; this interaction may be required for proper recruitment of dynein complexes to the nuclear envelope at prophase.

The protein resides in the nucleus. It is found in the cytoplasm. Its function is as follows. Component of the integrator complex, a multiprotein complex that terminates RNA polymerase II (Pol II) transcription in the promoter-proximal region of genes. The integrator complex provides a quality checkpoint during transcription elongation by driving premature transcription termination of transcripts that are unfavorably configured for transcriptional elongation: the complex terminates transcription by (1) catalyzing dephosphorylation of the C-terminal domain (CTD) of Pol II subunit POLR2A/RPB1 and SUPT5H/SPT5, (2) degrading the exiting nascent RNA transcript via endonuclease activity and (3) promoting the release of Pol II from bound DNA. The integrator complex is also involved in terminating the synthesis of non-coding Pol II transcripts, such as enhancer RNAs (eRNAs), small nuclear RNAs (snRNAs), telomerase RNAs and long non-coding RNAs (lncRNAs). Within the integrator complex, INTS13 is part of the integrator tail module and acts as a platform for the recruitment of transcription factors at promoters. At prophase, mediates recruitment of cytoplasmic dynein to the nuclear envelope, a step important for proper centrosome-nucleus coupling. At G2/M phase, may be required for proper spindle formation and execution of cytokinesis. The protein is Integrator complex subunit 13 of Mus musculus (Mouse).